A 235-amino-acid chain; its full sequence is Riboflavin kinase (235 aa).

Mg(2+) is bound by residues threonine 45 and asparagine 47. Glutamate 140 (nucleophile) is an active-site residue.

It belongs to the flavokinase family. The cofactor is Zn(2+). Mg(2+) serves as cofactor.

It carries out the reaction riboflavin + ATP = FMN + ADP + H(+). It participates in cofactor biosynthesis; FMN biosynthesis; FMN from riboflavin (ATP route): step 1/1. Its function is as follows. Catalyzes the phosphorylation of riboflavin (vitamin B2) to form flavin mononucleotide (FMN) coenzyme. This is Riboflavin kinase (FMN1) from Chaetomium globosum (strain ATCC 6205 / CBS 148.51 / DSM 1962 / NBRC 6347 / NRRL 1970) (Soil fungus).